Here is a 335-residue protein sequence, read N- to C-terminus: MKIGVIGSGSFGTALGSLLADKGYEVTLWCRNDSQIESINRNHINNKHLPDFTLPEKLTASKDLRTVVQGKDMIVSSPPSHALTEILREIKEYLPEKVPIVSASKGIENGTLRLVSEIFESELPGKYHSYLSYLSGPSFAKEIIQKVPTIVSIASRSETTARKVQEIFSFLYFRTYWTPDVIGVEVGGSLKNVIALAAGVSDGLGFGQNTRAALITRGLNEITKIGLKLGADPMTFLGPSGMGDLILTCCGGQSRNRTVGFRLGKGETLEQILSGMNEVAEGIKTTQSAYELSQKLGIEMAITNEVYKMLYEDKNPKEVVKDLMKRDLKREGVLV.

4 residues coordinate NADPH: serine 10, phenylalanine 11, arginine 31, and lysine 105. Residues lysine 105, glycine 136, and serine 138 each contribute to the sn-glycerol 3-phosphate site. Alanine 140 contributes to the NADPH binding site. Sn-glycerol 3-phosphate contacts are provided by lysine 191, aspartate 244, serine 254, arginine 255, and asparagine 256. The Proton acceptor role is filled by lysine 191. An NADPH-binding site is contributed by arginine 255. NADPH is bound by residues valine 279 and glutamate 281.

This sequence belongs to the NAD-dependent glycerol-3-phosphate dehydrogenase family.

The protein resides in the cytoplasm. It carries out the reaction sn-glycerol 3-phosphate + NAD(+) = dihydroxyacetone phosphate + NADH + H(+). It catalyses the reaction sn-glycerol 3-phosphate + NADP(+) = dihydroxyacetone phosphate + NADPH + H(+). The protein operates within membrane lipid metabolism; glycerophospholipid metabolism. Its function is as follows. Catalyzes the reduction of the glycolytic intermediate dihydroxyacetone phosphate (DHAP) to sn-glycerol 3-phosphate (G3P), the key precursor for phospholipid synthesis. In Leptospira borgpetersenii serovar Hardjo-bovis (strain L550), this protein is Glycerol-3-phosphate dehydrogenase [NAD(P)+].